Reading from the N-terminus, the 571-residue chain is GABA-specific permease (571 aa).

Over 1-73 (MSMSSKNENK…IGYKQELKRQ (73 aa)) the chain is Cytoplasmic. Residues 74 to 94 (FSTLQVFGIAFSIMGLLPSIA) form a helical membrane-spanning segment. Residues 95–105 (SVMGGGLGGGP) are Vacuolar-facing. A helical transmembrane segment spans residues 106–126 (ATLVWGWFVAAFFILLVGITM). Residues 127–153 (AEHASSIPTAGGLYYWTYYYAPEGYKE) are Cytoplasmic-facing. A helical transmembrane segment spans residues 154-174 (IISFIIGCSNSLALAAGVCSI). Residues 175–198 (DYGLAEEIAAAVTLTKDGNFEVTS) lie on the Vacuolar side of the membrane. Residues 199 to 219 (GKLYGIFAGAVVVMCICTCVA) traverse the membrane as a helical segment. Residues 220-228 (SGAIARLQT) are Cytoplasmic-facing. Residues 229-249 (LSIFANLFIIVLLFIALPIGT) form a helical membrane-spanning segment. Over 250-271 (KHRMGGFNDGDFIFGKYENLSD) the chain is Vacuolar. A helical transmembrane segment spans residues 272–292 (WNNGWQFCLAGFMPAVWTIGS). Topologically, residues 293 to 312 (FDSCVHQSEEAKDAKKSVPI) are cytoplasmic. A helical membrane pass occupies residues 313–333 (GIISSIAVCWILGWLIIICLM). The Vacuolar portion of the chain corresponds to 334 to 364 (ACINPDIDSVLDSKYGFALAQIIYDSLGKKW). The chain crosses the membrane as a helical span at residues 365–385 (AIAFMSLIAFCQFLMGASITT). Residues 386–416 (AVSRQVWAFSRDNGLPLSKYIKRVDSKYSVP) lie on the Cytoplasmic side of the membrane. A helical transmembrane segment spans residues 417 to 437 (FFAILAACVGSLILGLLCLID). Over 438–441 (DAAT) the chain is Vacuolar. The helical transmembrane segment at 442 to 462 (DALFSLAVAGNNLAWSTPTVF) threads the bilayer. Residues 463 to 482 (RLTSGRDLFRPGPFYLGKIW) are Cytoplasmic-facing. The helical transmembrane segment at 483-503 (SPIVAWTGVAFQLFIIILVMF) threads the bilayer. At 504 to 514 (PSQQHGITKST) the chain is on the vacuolar side. Residues 515–535 (MNYACVIGPGIWILAGIYYKV) form a helical membrane-spanning segment. The Cytoplasmic segment spans residues 536-571 (YKKKYYHGPATNLSDDDYTEAVGADVIDTIMSKQEP).

It belongs to the amino acid-polyamine-organocation (APC) superfamily. Amino acid/choline transporter (ACT) (TC 2.A.3.4) family.

Its subcellular location is the vacuole membrane. Functionally, required for high-affinity, high-specificity GABA transport. Also transports putrescine. This Saccharomyces cerevisiae (strain ATCC 204508 / S288c) (Baker's yeast) protein is GABA-specific permease (UGA4).